The sequence spans 257 residues: ECF RNA polymerase sigma factor SigE (257 aa).

Residues 87 to 153 are sigma-70 factor domain-2; it reads MPSWDELVRQ…RITTNLFLDM (67 aa). The Polymerase core binding motif lies at 111 to 114; sequence NQHD. The tract at residues 186 to 236 is sigma-70 factor domain-4; sequence SRLGADLQAALDSLPPEFRAAVVLCDIEGLSYEEIGATLGVKLGTVRSRIH. The H-T-H motif DNA-binding region spans 211-230; it reads DIEGLSYEEIGATLGVKLGT.

The protein belongs to the sigma-70 factor family. ECF subfamily. As to quaternary structure, interacts transiently with the RNA polymerase catalytic core formed by RpoA, RpoB, RpoC and RpoZ (2 alpha, 1 beta, 1 beta' and 1 omega subunit) to form the RNA polymerase holoenzyme that can initiate transcription. Interacts (via sigma-70 factor domain 4) with RseA; interaction is abrogated by treatment of cells with H(2)O(2) or detergent.

Its function is as follows. Sigma factors are initiation factors that promote the attachment of RNA polymerase to specific initiation sites and are then released. Extracytoplasmic function (ECF) sigma factors are held in an inactive form by an anti-sigma factor until released. This Mycolicibacterium smegmatis (strain ATCC 700084 / mc(2)155) (Mycobacterium smegmatis) protein is ECF RNA polymerase sigma factor SigE (sigE).